Here is a 421-residue protein sequence, read N- to C-terminus: Ethanolamine-phosphate cytidylyltransferase (421 aa).

A helical membrane pass occupies residues 8 to 28 (IVGSCIVGGAAFAVGASFLHL). The disordered stretch occupies residues 203 to 227 (SRSSLQRQFSHGHSSPKFEDGASSA). Residues 204–215 (RSSLQRQFSHGH) show a composition bias toward polar residues. Residues 262–263 (AF), 270–273 (HVEI), R298, 346–349 (HGTV), and 377–381 (SPLDI) each bind CTP. A disordered region spans residues 402–421 (AKKEASEKKYYEQKSFVSGD). Basic and acidic residues predominate over residues 403–413 (KKEASEKKYYE). S416 is modified (phosphoserine).

Belongs to the cytidylyltransferase family. In terms of tissue distribution, expressed in root tip, lateral root primordia, leaves, shoot apex, stem vascular bundles, pollen and embryos.

The protein localises to the mitochondrion outer membrane. The catalysed reaction is phosphoethanolamine + CTP + H(+) = CDP-ethanolamine + diphosphate. It participates in phospholipid metabolism; phosphatidylethanolamine biosynthesis; phosphatidylethanolamine from ethanolamine: step 2/3. Plays an important role in the biosynthesis of the phospholipid phosphatidylethanolamine. Catalyzes the formation of CDP-ethanolamine. Essential for early embryonic development. This is Ethanolamine-phosphate cytidylyltransferase from Arabidopsis thaliana (Mouse-ear cress).